Reading from the N-terminus, the 269-residue chain is Integral membrane protein 2C (269 aa).

Thr-39 carries the post-translational modification Phosphothreonine. Residues 57–77 form a helical; Signal-anchor for type II membrane protein membrane-spanning segment; sequence VGGVCYLSMGMVVLLMGLVFA. A BRICHOS domain is found at 138-232; it reads FGGGDPADII…LCNGKDTYRL (95 aa). The cysteines at positions 165 and 224 are disulfide-linked. Asn-171 carries an N-linked (GlcNAc...) asparagine glycan.

Belongs to the ITM2 family. Interacts with BACE1. Interacts with APP. Interacts with STMN2. Type I membrane-bound, as well as soluble, furin has a pre-eminent role in ITM2C proteolytic processing. PCSK7 and PCSK5 may also be involved although to a lesser extent. The soluble form of PCSK7 is incapable of processing ITM2C. Fails to undergo shedding by ADAM10 and intramembrane cleavage by SPPL2B.

The protein resides in the lysosome membrane. It localises to the cell membrane. Functionally, negative regulator of amyloid-beta peptide production. May inhibit the processing of APP by blocking its access to alpha- and beta-secretase. Binding to the beta-secretase-cleaved APP C-terminal fragment is negligible, suggesting that ITM2C is a poor gamma-secretase cleavage inhibitor. May play a role in TNF-induced cell death and neuronal differentiation. The chain is Integral membrane protein 2C (Itm2c) from Rattus norvegicus (Rat).